The primary structure comprises 490 residues: C-type lectin domain family 14 member A (490 aa).

An N-terminal signal peptide occupies residues 1–21 (MRPAFALCLLWQALWPGPGGG). At 22–397 (EHPTADRAGC…TPQAFDSSSA (376 aa)) the chain is on the extracellular side. Residues 33-173 (ASGACYSLHH…LRANGYLCKY (141 aa)) form the C-type lectin domain. Residues C143 and C162 are joined by a disulfide bond. N-linked (GlcNAc...) asparagine glycosylation occurs at N189. The region spanning 245–287 (PCPGRYLRAGKCAELPNCLDDLGGFACECATGFELGKDGRSCV) is the EGF-like domain. Positions 286–349 (CVTSGEGQPT…VTSIPEIPRW (64 aa)) are disordered. Over residues 301–315 (VPTRRPPATATSPVP) the composition is skewed to low complexity. N-linked (GlcNAc...) asparagine glycosylation is present at N381. A helical transmembrane segment spans residues 398 to 418 (VVFIFVSTAVVVLVILTMTVL). The Cytoplasmic segment spans residues 419–490 (GLVKLCFHES…AESPLGSSDA (72 aa)). Residues 428–461 (SPSSQPRKESMGPPGLESDPEPAALGSSSAHCTN) are disordered.

The protein localises to the membrane. The protein is C-type lectin domain family 14 member A (CLEC14A) of Homo sapiens (Human).